The following is a 374-amino-acid chain: Protein TAB2 homolog, chloroplastic (374 aa).

Residues 1–64 (MATLGFNTRR…SLSITKEQEV (64 aa)) constitute a chloroplast transit peptide. The disordered stretch occupies residues 58-84 (ITKEQEVANEVEEDDPTSELSYLDPES). Residues 64–74 (VANEVEEDDPT) are compositionally biased toward acidic residues.

Its subcellular location is the plastid. It is found in the chloroplast. Its function is as follows. Nuclear genome-encoded A/U-rich RNA-binding protein involved in the biogenesis of photosystem I (PSI) and II (PSII). Required for the light-controlled accumulation of PSI and PSII during early plant development. Does not seem to be required for the translation of mRNAs of the PSI subunits. The sequence is that of Protein TAB2 homolog, chloroplastic from Arabidopsis thaliana (Mouse-ear cress).